A 642-amino-acid polypeptide reads, in one-letter code: Threonine--tRNA ligase (642 aa).

A TGS domain is found at 1 to 61 (MPVITLPDGS…VDDASVAIIT (61 aa)). Positions 243–534 (DHRKIGKQLD…LTEEYAGFFP (292 aa)) are catalytic. The Zn(2+) site is built by Cys-334, His-385, and His-511.

Belongs to the class-II aminoacyl-tRNA synthetase family. As to quaternary structure, homodimer. It depends on Zn(2+) as a cofactor.

It localises to the cytoplasm. It carries out the reaction tRNA(Thr) + L-threonine + ATP = L-threonyl-tRNA(Thr) + AMP + diphosphate + H(+). Its function is as follows. Catalyzes the attachment of threonine to tRNA(Thr) in a two-step reaction: L-threonine is first activated by ATP to form Thr-AMP and then transferred to the acceptor end of tRNA(Thr). Also edits incorrectly charged L-seryl-tRNA(Thr). The protein is Threonine--tRNA ligase of Erwinia tasmaniensis (strain DSM 17950 / CFBP 7177 / CIP 109463 / NCPPB 4357 / Et1/99).